Here is a 514-residue protein sequence, read N- to C-terminus: Na(+)/H(+) antiporter NhaB (514 aa).

12 helical membrane-spanning segments follow: residues 23–43 (LALL…PFVA), 63–83 (PLLP…TSAA), 97–117 (LLLM…LFIF), 120–140 (LLLS…AAAF), 144–164 (FLDA…FYGI), 202–222 (LMMH…VGEP), 238–258 (FFLR…LTCM), 303–323 (AVIG…VGLI), 357–377 (LTVF…APII), 391–411 (LFYL…VGTI), 447–467 (ATPN…APLI), and 475–495 (VWMA…CVEF).

This sequence belongs to the NhaB Na(+)/H(+) (TC 2.A.34) antiporter family.

The protein localises to the cell inner membrane. The enzyme catalyses 2 Na(+)(in) + 3 H(+)(out) = 2 Na(+)(out) + 3 H(+)(in). In terms of biological role, na(+)/H(+) antiporter that extrudes sodium in exchange for external protons. The chain is Na(+)/H(+) antiporter NhaB from Salmonella paratyphi A (strain ATCC 9150 / SARB42).